A 458-amino-acid chain; its full sequence is Argininosuccinate lyase (458 aa).

Belongs to the lyase 1 family. Argininosuccinate lyase subfamily.

Its subcellular location is the cytoplasm. The catalysed reaction is 2-(N(omega)-L-arginino)succinate = fumarate + L-arginine. It functions in the pathway amino-acid biosynthesis; L-arginine biosynthesis; L-arginine from L-ornithine and carbamoyl phosphate: step 3/3. The sequence is that of Argininosuccinate lyase from Salmonella typhi.